A 158-amino-acid chain; its full sequence is 2-C-methyl-D-erythritol 2,4-cyclodiphosphate synthase (158 aa).

2 residues coordinate a divalent metal cation: Asp9 and His11. 4-CDP-2-C-methyl-D-erythritol 2-phosphate-binding positions include 9 to 11 (DVH) and 35 to 36 (HS). His43 is an a divalent metal cation binding site. 4-CDP-2-C-methyl-D-erythritol 2-phosphate contacts are provided by residues 57–59 (DIG), 62–66 (FPDTD), 133–136 (TTTE), Phe140, and Arg143.

Belongs to the IspF family. Homotrimer. It depends on a divalent metal cation as a cofactor.

The catalysed reaction is 4-CDP-2-C-methyl-D-erythritol 2-phosphate = 2-C-methyl-D-erythritol 2,4-cyclic diphosphate + CMP. It functions in the pathway isoprenoid biosynthesis; isopentenyl diphosphate biosynthesis via DXP pathway; isopentenyl diphosphate from 1-deoxy-D-xylulose 5-phosphate: step 4/6. Its function is as follows. Involved in the biosynthesis of isopentenyl diphosphate (IPP) and dimethylallyl diphosphate (DMAPP), two major building blocks of isoprenoid compounds. Catalyzes the conversion of 4-diphosphocytidyl-2-C-methyl-D-erythritol 2-phosphate (CDP-ME2P) to 2-C-methyl-D-erythritol 2,4-cyclodiphosphate (ME-CPP) with a corresponding release of cytidine 5-monophosphate (CMP). The protein is 2-C-methyl-D-erythritol 2,4-cyclodiphosphate synthase of Haemophilus influenzae (strain 86-028NP).